A 167-amino-acid polypeptide reads, in one-letter code: N-alpha-acetyltransferase (167 aa).

Positions 12–167 constitute an N-acetyltransferase domain; that stretch reads FTLRNARMDD…EDAYLMARPL (156 aa). Position 37 (Tyr37) interacts with substrate. His88 serves as a coordination point for Zn(2+). Acetyl-CoA is bound by residues 92–94 and 100–105; these read IAV and RKGIAT. Glu127 lines the Zn(2+) pocket. Residues Asn132 and 139–141 each bind acetyl-CoA; that span reads YEK. A substrate-binding site is contributed by Tyr154.

It belongs to the acetyltransferase family. ARD1 subfamily. Homodimer.

It is found in the cytoplasm. The enzyme catalyses N-terminal L-alanyl-[protein] + acetyl-CoA = N-terminal N(alpha)-acetyl-L-alanyl-[protein] + CoA + H(+). It catalyses the reaction N-terminal L-seryl-[protein] + acetyl-CoA = N-terminal N(alpha)-acetyl-L-seryl-[protein] + CoA + H(+). It carries out the reaction N-terminal L-methionyl-L-leucyl-[protein] + acetyl-CoA = N-terminal N(alpha)-acetyl-L-methionyl-L-leucyl-[protein] + CoA + H(+). The catalysed reaction is N-terminal L-methionyl-L-glutamyl-[protein] + acetyl-CoA = N-terminal N(alpha)-acetyl-L-methionyl-L-glutamyl-[protein] + CoA + H(+). In terms of biological role, displays alpha (N-terminal) acetyltransferase activity. Catalyzes the covalent attachment of an acetyl moiety from acetyl-CoA to the free alpha-amino group at the N-terminus of a protein. NAT is able to acetylate the alpha-amino group of methionine, alanine and serine N-terminal residue substrates, however it has a preference for Ser-N-terminal substrates. The protein is N-alpha-acetyltransferase of Saccharolobus solfataricus (strain ATCC 35092 / DSM 1617 / JCM 11322 / P2) (Sulfolobus solfataricus).